The chain runs to 539 residues: CTP synthase (539 aa).

Residues 1 to 272 are amidoligase domain; sequence MTLRSKMTKY…AQIILSHFKI (272 aa). Serine 19 lines the CTP pocket. Serine 19 contacts UTP. 20-25 provides a ligand contact to ATP; that stretch reads GLGKGV. Tyrosine 60 contributes to the L-glutamine binding site. Residue aspartate 77 coordinates ATP. Positions 77 and 147 each coordinate Mg(2+). Residues 154-156, 193-198, and lysine 229 contribute to the CTP site; these read DIE and KSKPTQ. Residues 193–198 and lysine 229 contribute to the UTP site; that span reads KSKPTQ. The 242-residue stretch at 298–539 folds into the Glutamine amidotransferase type-1 domain; the sequence is KILMVGKYVE…SFLRVLIKNN (242 aa). Glycine 360 serves as a coordination point for L-glutamine. Cysteine 387 serves as the catalytic Nucleophile; for glutamine hydrolysis. Residues 388-391, glutamate 410, and arginine 469 contribute to the L-glutamine site; that span reads LGFQ. Catalysis depends on residues histidine 514 and glutamate 516.

This sequence belongs to the CTP synthase family. In terms of assembly, homotetramer.

The catalysed reaction is UTP + L-glutamine + ATP + H2O = CTP + L-glutamate + ADP + phosphate + 2 H(+). It catalyses the reaction L-glutamine + H2O = L-glutamate + NH4(+). The enzyme catalyses UTP + NH4(+) + ATP = CTP + ADP + phosphate + 2 H(+). Its pathway is pyrimidine metabolism; CTP biosynthesis via de novo pathway; CTP from UDP: step 2/2. Its activity is regulated as follows. Allosterically activated by GTP, when glutamine is the substrate; GTP has no effect on the reaction when ammonia is the substrate. The allosteric effector GTP functions by stabilizing the protein conformation that binds the tetrahedral intermediate(s) formed during glutamine hydrolysis. Inhibited by the product CTP, via allosteric rather than competitive inhibition. Its function is as follows. Catalyzes the ATP-dependent amination of UTP to CTP with either L-glutamine or ammonia as the source of nitrogen. Regulates intracellular CTP levels through interactions with the four ribonucleotide triphosphates. The protein is CTP synthase of Mycoplasmopsis pulmonis (strain UAB CTIP) (Mycoplasma pulmonis).